Here is a 232-residue protein sequence, read N- to C-terminus: RNA chaperone ProQ (232 aa).

Residues 105–182 (EAKARVQAQR…REEQHTPVSD (78 aa)) form a disordered region. The span at 117–136 (QQAKKREAAATAGEKEDAPR) shows a compositional bias: basic and acidic residues. Over residues 137-146 (RERKPRPTTP) the composition is skewed to basic residues. Over residues 147-177 (RRKEGAERKPRAQKPVEKAPKTVKAPREEQH) the composition is skewed to basic and acidic residues.

It belongs to the ProQ family.

The protein resides in the cytoplasm. In terms of biological role, RNA chaperone with significant RNA binding, RNA strand exchange and RNA duplexing activities. May regulate ProP activity through an RNA-based, post-transcriptional mechanism. The chain is RNA chaperone ProQ from Escherichia coli (strain K12).